The primary structure comprises 550 residues: Coiled-coil domain-containing protein 60 (550 aa).

The interval 1-21 (MTKVPATKKLQSSPNSGAVRP) is disordered. Residues 71–98 (AILREETAKKKKQQQLQKLKEEERNKFQ) are a coiled coil. Disordered stretches follow at residues 219 to 293 (KFKI…EPLY) and 336 to 367 (AYKEMQTTLKSSERSSSTSAESHIQPVQKKSK). Low complexity predominate over residues 235–256 (RGSTLSLSRASGGSSPQSSMIS). The segment covering 336-345 (AYKEMQTTLK) has biased composition (polar residues).

The polypeptide is Coiled-coil domain-containing protein 60 (CCDC60) (Homo sapiens (Human)).